The primary structure comprises 367 residues: Porin Omp2a (367 aa).

Positions 1–22 (MNIKSLLLGSAAALVAASGAQA) are cleaved as a signal peptide.

Belongs to the alphaproteobacteria porin family. In terms of assembly, monomer.

The protein resides in the cell outer membrane. Functionally, forms passive diffusion pores that allow small molecular weight hydrophilic materials across the outer membrane. This is Porin Omp2a (omp2a) from Brucella suis.